The chain runs to 214 residues: Probable transaldolase (214 aa).

The active-site Schiff-base intermediate with substrate is the lysine 83.

Belongs to the transaldolase family. Type 3B subfamily.

Its subcellular location is the cytoplasm. It carries out the reaction D-sedoheptulose 7-phosphate + D-glyceraldehyde 3-phosphate = D-erythrose 4-phosphate + beta-D-fructose 6-phosphate. The protein operates within carbohydrate degradation; pentose phosphate pathway; D-glyceraldehyde 3-phosphate and beta-D-fructose 6-phosphate from D-ribose 5-phosphate and D-xylulose 5-phosphate (non-oxidative stage): step 2/3. Transaldolase is important for the balance of metabolites in the pentose-phosphate pathway. This chain is Probable transaldolase, found in Streptococcus equi subsp. zooepidemicus (strain H70).